The following is a 355-amino-acid chain: Capsid protein VP1/VP2 (355 aa).

Residues 1–21 (MADSTTMEHDGRGTKRKREAD) are compositionally biased toward basic and acidic residues. The tract at residues 1 to 41 (MADSTTMEHDGRGTKRKREADGGSGQGVGKGNSNAVKEGYG) is disordered.

The protein belongs to the parvoviridae capsid protein family.

The protein localises to the virion. In terms of biological role, capsid protein self-assembles to form an icosahedral capsid with a T=1 symmetry, about 22 nm in diameter, and consisting of 60 copies of size variants of the capsid proteins, which differ in the N-terminushe capsid encapsulates the genomic ssDNA. Capsid proteins are responsible for the attachment to host cell receptors. This attachment induces virion internalization predominantly through clathrin-dependent endocytosis. This Aedes albopictus densovirus (isolate Boublik/1994) (AalDNV) protein is Capsid protein VP1/VP2 (VP).